A 468-amino-acid polypeptide reads, in one-letter code: Ribulose bisphosphate carboxylase large chain (468 aa).

Lysine 7 is subject to N6,N6,N6-trimethyllysine. Positions 116 and 166 each coordinate substrate. Lysine 168 acts as the Proton acceptor in catalysis. Lysine 170 contacts substrate. Mg(2+)-binding residues include lysine 194, aspartate 196, and glutamate 197. Lysine 194 carries the N6-carboxylysine modification. Histidine 287 (proton acceptor) is an active-site residue. The substrate site is built by arginine 288, histidine 320, and serine 372.

Belongs to the RuBisCO large chain family. Type I subfamily. As to quaternary structure, heterohexadecamer of 8 large chains and 8 small chains. Requires Mg(2+) as cofactor.

It is found in the plastid. It localises to the chloroplast. The enzyme catalyses 2 (2R)-3-phosphoglycerate + 2 H(+) = D-ribulose 1,5-bisphosphate + CO2 + H2O. It carries out the reaction D-ribulose 1,5-bisphosphate + O2 = 2-phosphoglycolate + (2R)-3-phosphoglycerate + 2 H(+). Functionally, ruBisCO catalyzes two reactions: the carboxylation of D-ribulose 1,5-bisphosphate, the primary event in carbon dioxide fixation, as well as the oxidative fragmentation of the pentose substrate in the photorespiration process. Both reactions occur simultaneously and in competition at the same active site. The sequence is that of Ribulose bisphosphate carboxylase large chain from Couroupita guianensis (Cannonball tree).